The following is a 599-amino-acid chain: Elongation factor 4 (599 aa).

The 183-residue stretch at 5–187 (SHIRNFSIIA…RLVTTIPAPT (183 aa)) folds into the tr-type G domain. GTP is bound by residues 17–22 (DHGKST) and 134–137 (NKID).

Belongs to the TRAFAC class translation factor GTPase superfamily. Classic translation factor GTPase family. LepA subfamily.

The protein localises to the cell inner membrane. The enzyme catalyses GTP + H2O = GDP + phosphate + H(+). Functionally, required for accurate and efficient protein synthesis under certain stress conditions. May act as a fidelity factor of the translation reaction, by catalyzing a one-codon backward translocation of tRNAs on improperly translocated ribosomes. Back-translocation proceeds from a post-translocation (POST) complex to a pre-translocation (PRE) complex, thus giving elongation factor G a second chance to translocate the tRNAs correctly. Binds to ribosomes in a GTP-dependent manner. The chain is Elongation factor 4 from Pseudomonas fluorescens (strain ATCC BAA-477 / NRRL B-23932 / Pf-5).